The chain runs to 413 residues: Putative acid phosphatase 11 (413 aa).

H35 (nucleophile) is an active-site residue. Catalysis depends on D315, which acts as the Proton donor. C381 and C387 are disulfide-bonded.

This sequence belongs to the histidine acid phosphatase family.

It carries out the reaction a phosphate monoester + H2O = an alcohol + phosphate. The chain is Putative acid phosphatase 11 (pho-11) from Caenorhabditis elegans.